Reading from the N-terminus, the 537-residue chain is [Pyruvate dehydrogenase [acetyl-transferring]]-phosphatase 1, mitochondrial (537 aa).

The N-terminal 71 residues, 1–71, are a transit peptide targeting the mitochondrion; it reads MPAPTQLFFP…WWHYTQGRRY (71 aa). A PPM-type phosphatase domain is found at 109 to 525; it reads ILGFDSNQLP…DDITIIVVQF (417 aa). Residues Asp144 and Gly145 each contribute to the Mn(2+) site. The residue at position 202 (Lys202) is an N6-acetyllysine. Residues Asp418 and Asp516 each contribute to the Mn(2+) site.

It belongs to the PP2C family. As to quaternary structure, heterodimer of a catalytic (PDP1) and a regulatory (PDPR) subunit. Mn(2+) is required as a cofactor. The cofactor is Mg(2+).

It localises to the mitochondrion. It carries out the reaction O-phospho-L-seryl-[pyruvate dehydrogenase E1 alpha subunit] + H2O = L-seryl-[pyruvate dehydrogenase E1 alpha subunit] + phosphate. With respect to regulation, magnesium-dependent and calcium-stimulated. PDP1 activity strongly depends on its Ca(2+)-dependent binding to the lipoyl domain of E2 subunit of component of the pyruvate dehydrogenase complex. Functionally, mitochondrial enzyme that catalyzes the dephosphorylation and concomitant reactivation of the alpha subunit of the E1 component of the pyruvate dehydrogenase complex (PDC), thereby stimulating the conversion of pyruvate into acetyl-CoA. In Pongo abelii (Sumatran orangutan), this protein is [Pyruvate dehydrogenase [acetyl-transferring]]-phosphatase 1, mitochondrial (PDP1).